The chain runs to 213 residues: Ras-like protein rasX (213 aa).

16–23 (GDGGVGKT) provides a ligand contact to GTP. The Effector region signature appears at 38–46 (YDPTIEDSY). GTP is bound by residues 63–67 (DTAGQ) and 122–125 (NKSD). Cysteine 210 is modified (cysteine methyl ester). Cysteine 210 carries the S-geranylgeranyl cysteine lipid modification. Residues 211–213 (KMM) constitute a propeptide, removed in mature form.

The protein belongs to the small GTPase superfamily. Ras family.

The protein resides in the cell membrane. It catalyses the reaction GTP + H2O = GDP + phosphate + H(+). Ras proteins bind GDP/GTP and possess intrinsic GTPase activity. In Dictyostelium discoideum (Social amoeba), this protein is Ras-like protein rasX (rasX).